We begin with the raw amino-acid sequence, 451 residues long: MKKHLHEIKMLLKITIPIFLAQISQTSMSLINSIMIGHLKENNIAAISVGISIWSPIILFGHGLLLSLVPTVSRIHGSGKINKIPEQINNAYWLATLISLVIMIVLWNSDVIIHTISQVNPIIEQESIKYIRILLWSTPGYLYFQVIQNQCEGLLKPKPAMVIGLIGLLFNIVVSYTLISEKFHCFNYGSTGCGISAIIVYWFMFIAMKKITKNDILINYNIKNKNISNLEMYLPNYKIIWNLFKMGFPIALSLFCEITLFTLITLLIASMETFQIIAHQIALNISSTIFILPLSIATAASIRLGFYLGKKSFSKISTIILSSQIIGLIISTTISTFIILFHYQIITLYTKNANIIKLTKQMLFITASYQIFDFFQIIGNGILRSYKDTNIIFIITCTSYWIVGFPFGYFLALTNYIVPHMGAIGFWYGILIALITSSIMILFRIYILQKK.

Helical transmembrane passes span 44 to 66, 92 to 109, 130 to 147, 162 to 179, 186 to 208, 247 to 269, 282 to 304, 319 to 341, 391 to 413, and 423 to 445; these read IAAI…GLLL, YWLA…LWNS, YIRI…FQVI, VIGL…YTLI, FNYG…FIAM, GFPI…LLIA, ALNI…SIRL, IILS…IILF, IIFI…FLAL, and AIGF…LFRI.

The protein belongs to the multi antimicrobial extrusion (MATE) (TC 2.A.66.1) family.

Its subcellular location is the cell membrane. Multidrug efflux pump. The sequence is that of Probable multidrug resistance protein NorM (norM) from Buchnera aphidicola subsp. Baizongia pistaciae (strain Bp).